Here is a 428-residue protein sequence, read N- to C-terminus: Enolase (428 aa).

Glutamine 162 contributes to the (2R)-2-phosphoglycerate binding site. Residue glutamate 204 is the Proton donor of the active site. Residues aspartate 241, glutamate 288, and aspartate 315 each coordinate Mg(2+). Residues lysine 340, arginine 369, serine 370, and lysine 391 each contribute to the (2R)-2-phosphoglycerate site. Lysine 340 serves as the catalytic Proton acceptor.

It belongs to the enolase family. It depends on Mg(2+) as a cofactor.

The protein localises to the cytoplasm. The protein resides in the secreted. It localises to the cell surface. The catalysed reaction is (2R)-2-phosphoglycerate = phosphoenolpyruvate + H2O. It functions in the pathway carbohydrate degradation; glycolysis; pyruvate from D-glyceraldehyde 3-phosphate: step 4/5. Catalyzes the reversible conversion of 2-phosphoglycerate (2-PG) into phosphoenolpyruvate (PEP). It is essential for the degradation of carbohydrates via glycolysis. The chain is Enolase from Azobacteroides pseudotrichonymphae genomovar. CFP2.